Reading from the N-terminus, the 156-residue chain is Small ribosomal subunit protein uS7 (156 aa).

It belongs to the universal ribosomal protein uS7 family. In terms of assembly, part of the 30S ribosomal subunit. Contacts proteins S9 and S11.

Its function is as follows. One of the primary rRNA binding proteins, it binds directly to 16S rRNA where it nucleates assembly of the head domain of the 30S subunit. Is located at the subunit interface close to the decoding center, probably blocks exit of the E-site tRNA. The sequence is that of Small ribosomal subunit protein uS7 from Gloeothece citriformis (strain PCC 7424) (Cyanothece sp. (strain PCC 7424)).